Consider the following 345-residue polypeptide: MGQQKQRNRRWVLASRPHGAPVPENFRLEEDDVATPGEGQVLLRTVYLSLDPYMRGRMSDEPSYSPPVDIGGVMVGGTVSRVVESNHPDYQSGDWVLGYSGWQDYDISSGDDLVKLGDHPQNPSWSLGVLGMPGFTAYMGLLDIGQPKEGETLVVAAATGPVGATVGQIGKLKGCRVVGVAGGAEKCRHATEVLGFDVCLDHHADDFAEQLAKACPKGIDIYYENVGGKVFDAVLPLLNTSARIPVCGLVSSYNATELPPGPDRLPLLMATVLKKRIRLQGFIIAQDYGHRIHEFQREMGQWVKEDKIHYREEITDGLENAPQTFIGLLKGKNFGKVVIRVAGDD.

The span at 1 to 10 shows a compositional bias: basic residues; the sequence is MGQQKQRNRR. The segment at 1-24 is disordered; sequence MGQQKQRNRRWVLASRPHGAPVPE. NADP(+) contacts are provided by Lys-186, Asn-225, and Asn-333.

As to quaternary structure, homodimer.

The enzyme catalyses tetrahydrocurcumin + 2 NADP(+) = curcumin + 2 NADPH + 2 H(+). The catalysed reaction is tetrahydrocurcumin + NADP(+) = dihydrocurcumin + NADPH + H(+). It catalyses the reaction dihydrocurcumin + NADP(+) = curcumin + NADPH + H(+). With respect to regulation, inhibited by thiol-specific reagents (p-chloromercuribenzoate and 5,5'-dithio-bis-2-nitrobenzoate). Its function is as follows. Catalyzes the metal-independent reduction of curcumin to dihydrocurcumin (DHC) as an intermediate product, followed by further reduction to tetrahydrocurcumin (THC) as an end product. It also acts on 3-octene-2-one, 3-hepten-2-one, resveratrol, and trans-2-octenal. This Escherichia coli (strain K12) protein is NADPH-dependent curcumin reductase.